A 310-amino-acid polypeptide reads, in one-letter code: Hairy/enhancer-of-split related with YRPW motif-like protein (310 aa).

The tract at residues 1–21 (MKRPHDYSSPDSDTDELIDVG) is disordered. Over residues 12–21 (SDTDELIDVG) the composition is skewed to acidic residues. Residues 43 to 98 (ARKKRRGIIEKRRRDRINHSLSELRRLVPSAFEKQGSSKLEKAEILQMTVDHLKLL) form the bHLH domain. Residues 116–152 (YRTLGFRECVGEVVRYLSSLEGVESSDPIGARLVSHL) form the Orange domain. Low complexity-rich tracts occupy residues 182–192 (LQAASPPASST) and 261–273 (PSSSSSSSNSSPP). Disordered regions lie at residues 182–208 (LQAASPPASSTPFPPNARRDLAPHGTA) and 248–310 (HRLQ…IGAF). The segment covering 293–302 (LSSSSKSAQA) has biased composition (polar residues).

This sequence belongs to the HEY family.

Its subcellular location is the nucleus. Functionally, transcriptional repressor which functions as a downstream effector of Notch signaling. The polypeptide is Hairy/enhancer-of-split related with YRPW motif-like protein (heyl) (Danio rerio (Zebrafish)).